We begin with the raw amino-acid sequence, 371 residues long: Probable alcohol acetyltransferase (371 aa).

Catalysis depends on charge relay system residues Ser-124 and His-295. The interval 325–352 (AKALEESPKESYSRPPAHQQPLHKNDFT) is disordered. The segment covering 327–336 (ALEESPKESY) has biased composition (basic and acidic residues).

Belongs to the AB hydrolase superfamily.

Its function is as follows. Probable alcohol acetyltransferase that uses acetyl-CoA to synthesize acetate esters from various alcohols. Not involved in the synthesis of ethyl acetate. In Cyberlindnera fabianii (Yeast), this protein is Probable alcohol acetyltransferase (EAT2).